A 389-amino-acid chain; its full sequence is Glutamate 5-kinase (389 aa).

K17 serves as a coordination point for ATP. Substrate contacts are provided by S57, D144, and N156. 176 to 177 contacts ATP; that stretch reads SD. Residues 282-359 enclose the PUA domain; sequence AGEIHVDAGA…NEIETILGYV (78 aa).

The protein belongs to the glutamate 5-kinase family.

It is found in the cytoplasm. The catalysed reaction is L-glutamate + ATP = L-glutamyl 5-phosphate + ADP. It participates in amino-acid biosynthesis; L-proline biosynthesis; L-glutamate 5-semialdehyde from L-glutamate: step 1/2. Its function is as follows. Catalyzes the transfer of a phosphate group to glutamate to form L-glutamate 5-phosphate. The sequence is that of Glutamate 5-kinase from Agrobacterium fabrum (strain C58 / ATCC 33970) (Agrobacterium tumefaciens (strain C58)).